Reading from the N-terminus, the 395-residue chain is Capsid protein (395 aa).

The span at 1-41 shows a compositional bias: basic residues; it reads MARKYAKRSKSRPRTARRSPKSRSRPRSRAPRRKAPSRPRI. Residues 1-51 are disordered; the sequence is MARKYAKRSKSRPRTARRSPKSRSRPRSRAPRRKAPSRPRIQRVNPVRRPM. The short motif at 2–9 is the Nuclear localization signal element; sequence ARKYAKRS.

It localises to the host nucleus. The protein resides in the virion. Self-assembles to form the virion icosahedral capsid. This is Capsid protein from Chaetoceros setoense (Chaetoceros setoense DNA virus).